A 435-amino-acid chain; its full sequence is MKTTYVNATIVTMNEQNEVIENGYIIVENDQIIDVKSGEFANDFEVDEVIDMKGKWVLPGLVNTHTHVVMSLLRGIGDDMLLQPWLETRIWPLESQFTPELAVASTELGLLEMVKSGTTSFSDMFNPIGVDQDAIMETVSRSGMRAAVSRTLFSFGTKDDEKKAIEEAEKYVKRYYNESGMLTTMVAPHSPYTCSTELLEECARIAVENQTMVHIHLSETEREVRDIEAQYGKRPVEYAASCGLFKRPTVIAHGVVLNENERAFLAEHDVRVAHNPNSNLKLGSGIANVKAMLEAGMKVGIATDSVASNNNLDMFEEMRIATLLQKGIHQDATALPVETALTLATKGAAEVIGMKQTGSLEVGKCADFITIDPSNKPHLQPADEVLSHLVYAASGKDISDVIINGKRVVWNGECKTLDEERIIFEASRYKRGLQR.

Residues His65 and His67 each coordinate Zn(2+). Residues Glu94, Arg150, and His189 each coordinate substrate. His216 serves as a coordination point for Zn(2+). 2 residues coordinate substrate: Glu219 and Asp304. Asp304 lines the Zn(2+) pocket.

Belongs to the metallo-dependent hydrolases superfamily. MTA/SAH deaminase family. It depends on Zn(2+) as a cofactor.

The catalysed reaction is S-adenosyl-L-homocysteine + H2O + H(+) = S-inosyl-L-homocysteine + NH4(+). It carries out the reaction S-methyl-5'-thioadenosine + H2O + H(+) = S-methyl-5'-thioinosine + NH4(+). Functionally, catalyzes the deamination of 5-methylthioadenosine and S-adenosyl-L-homocysteine into 5-methylthioinosine and S-inosyl-L-homocysteine, respectively. Is also able to deaminate adenosine. In Bacillus cereus (strain ATCC 10987 / NRS 248), this protein is 5-methylthioadenosine/S-adenosylhomocysteine deaminase.